The chain runs to 94 residues: Small ribosomal subunit protein uS19c (94 aa).

The protein belongs to the universal ribosomal protein uS19 family.

The protein localises to the plastid. It localises to the chloroplast. Functionally, protein S19 forms a complex with S13 that binds strongly to the 16S ribosomal RNA. This chain is Small ribosomal subunit protein uS19c (rps19), found in Euglena gracilis.